The following is a 1172-amino-acid chain: Lysylphosphatidylglycerol biosynthesis bifunctional protein LysX (1172 aa).

Residues 1–34 are disordered; sequence MGLHLTVPGLRRDGRGVQSNSHDTSSKTTADISR. The tract at residues 1–663 is phosphatidylglycerol lysyltransferase; that stretch reads MGLHLTVPGL…LLHHDGSAPD (663 aa). A compositionally biased stretch (polar residues) spans 17–31; the sequence is VQSNSHDTSSKTTAD. The next 7 helical transmembrane spans lie at 80-100, 122-142, 146-166, 177-197, 214-234, 272-292, and 612-632; these read VPAA…LASV, FPDT…ALTA, IAWL…AAEI, FGEN…VLGY, AVWL…VELF, AIFG…LFLS, and VIPR…LPFS. Positions 664-1172 are lysine--tRNA ligase; that stretch reads VSGLRQVGLT…TLPFPLAKPH (509 aa). The segment at residues 726 to 804 is a DNA-binding region (OB); sequence VSVSGRIMRI…SLIVSGWRLI (79 aa). D1084 and E1091 together coordinate Mg(2+).

This sequence in the N-terminal section; belongs to the LPG synthetase family. The protein in the C-terminal section; belongs to the class-II aminoacyl-tRNA synthetase family. Mg(2+) serves as cofactor.

The protein localises to the cell membrane. The catalysed reaction is tRNA(Lys) + L-lysine + ATP = L-lysyl-tRNA(Lys) + AMP + diphosphate. It carries out the reaction L-lysyl-tRNA(Lys) + a 1,2-diacyl-sn-glycero-3-phospho-(1'-sn-glycerol) = a 1,2-diacyl-sn-glycero-3-phospho-1'-(3'-O-L-lysyl)-sn-glycerol + tRNA(Lys). Catalyzes the production of L-lysyl-tRNA(Lys)transfer and the transfer of a lysyl group from L-lysyl-tRNA(Lys) to membrane-bound phosphatidylglycerol (PG), which produces lysylphosphatidylglycerol (LPG), one of the components of the bacterial membrane with a positive net charge. LPG synthesis contributes to the resistance to cationic antimicrobial peptides (CAMPs) and likely protects M.tuberculosis against the CAMPs produced by competiting microorganisms (bacteriocins). In fact, the modification of anionic phosphatidylglycerol with positively charged L-lysine results in repulsion of the peptides. In Mycobacterium bovis (strain BCG / Pasteur 1173P2), this protein is Lysylphosphatidylglycerol biosynthesis bifunctional protein LysX (lysX).